The primary structure comprises 497 residues: Serine/threonine-protein phosphatase 2A 56 kDa regulatory subunit beta isoform (497 aa).

The segment covering 1 to 19 (METKLPPASTPTSPSSPGL) has biased composition (low complexity). Disordered regions lie at residues 1 to 55 (METK…YQSN) and 473 to 497 (QGTQ…GGQS). A phosphoserine mark is found at Ser32, Ser35, Ser44, Ser46, Ser47, and Ser48. Residues 34–45 (RSLRRARPRRSH) are compositionally biased toward basic residues.

This sequence belongs to the phosphatase 2A regulatory subunit B56 family. Component of the serine/threonine-protein phosphatase 2A complex (PP2A). This complex consists of a common heterodimeric core enzyme, composed of a 36 kDa catalytic subunit (subunit C) and a 65 kDa constant scaffold subunit (PR65 or subunit A), that associates with a variety of regulatory subunits. Proteins that associate with the core dimer include three families of regulatory subunits B (the R2/B/PR55/B55, R3/B''/PR72/PR130/PR59 and R5/B'/B56 families), the 48 kDa variable regulatory subunit, viral proteins, and cell signaling molecules. Interacts with SGO1. Interacts with AKT1. In terms of processing, ubiquitinated by CUL3-KLHL15 complex; this modification leads to proteasomal degradation. In terms of tissue distribution, widely expressed at the mRNA level, with highest levels in cerebellum and lung.

The protein resides in the cytoplasm. Functionally, as the regulatory component of the serine/threonine-protein phosphatase 2A (PP2A) holoenzyme, modulates substrate specificity, subcellular localization, and responsiveness to phosphorylation. The phosphorylated form mediates the interaction between PP2A and AKT1, leading to AKT1 dephosphorylation. This is Serine/threonine-protein phosphatase 2A 56 kDa regulatory subunit beta isoform (Ppp2r5b) from Rattus norvegicus (Rat).